The sequence spans 155 residues: Small ribosomal subunit protein uS7cz/uS7cy (155 aa).

It belongs to the universal ribosomal protein uS7 family. Part of the 30S ribosomal subunit.

The protein resides in the plastid. Its subcellular location is the chloroplast. Functionally, one of the primary rRNA binding proteins, it binds directly to 16S rRNA where it nucleates assembly of the head domain of the 30S subunit. The polypeptide is Small ribosomal subunit protein uS7cz/uS7cy (rps7-A) (Amborella trichopoda).